A 45-amino-acid chain; its full sequence is Bomanin Short 2 (45 aa).

The signal sequence occupies residues 1 to 20 (MKFFSVVTVFVFGLLALANA). Residues 21–27 (VPLSPDP) constitute a propeptide, removed by a dipeptidylpeptidase. A disulfide bond links Cys-36 and Cys-39. Glycine amide is present on Gly-43.

As to expression, hemolymph (at protein level).

The protein resides in the secreted. Its function is as follows. Secreted immune-induced peptide induced by Toll signaling. Has a role in resistance to bacterial and fungal infections. In Drosophila melanogaster (Fruit fly), this protein is Bomanin Short 2.